A 274-amino-acid polypeptide reads, in one-letter code: Nitrogenase iron protein (274 aa).

8-15 (GKGGIGKS) serves as a coordination point for ATP. Cysteine 94 is a [4Fe-4S] cluster binding site. Arginine 97 is modified (ADP-ribosylarginine; by dinitrogenase reductase ADP-ribosyltransferase). Cysteine 131 is a [4Fe-4S] cluster binding site.

This sequence belongs to the NifH/BchL/ChlL family. In terms of assembly, homodimer. [4Fe-4S] cluster is required as a cofactor. Post-translationally, the reversible ADP-ribosylation of Arg-97 inactivates the nitrogenase reductase and regulates nitrogenase activity.

The enzyme catalyses N2 + 8 reduced [2Fe-2S]-[ferredoxin] + 16 ATP + 16 H2O = H2 + 8 oxidized [2Fe-2S]-[ferredoxin] + 2 NH4(+) + 16 ADP + 16 phosphate + 6 H(+). Its function is as follows. The key enzymatic reactions in nitrogen fixation are catalyzed by the nitrogenase complex, which has 2 components: the iron protein and the molybdenum-iron protein. The sequence is that of Nitrogenase iron protein from Chlorobium chlorochromatii (strain CaD3).